An 810-amino-acid chain; its full sequence is Phenylalanine--tRNA ligase beta subunit (810 aa).

A tRNA-binding domain is found at 39–151; sequence RTWAAGVVVG…AGLQAGQPVG (113 aa). Positions 408–494 constitute a B5 domain; the sequence is EPEHSITLRL…RLYGYDNFGE (87 aa). Positions 472, 478, 481, and 482 each coordinate Mg(2+). One can recognise an FDX-ACB domain in the interval 716 to 809; that stretch reads SSFPASDRDL…LVERFRVTLR (94 aa).

It belongs to the phenylalanyl-tRNA synthetase beta subunit family. Type 1 subfamily. As to quaternary structure, tetramer of two alpha and two beta subunits. The cofactor is Mg(2+).

The protein localises to the cytoplasm. It carries out the reaction tRNA(Phe) + L-phenylalanine + ATP = L-phenylalanyl-tRNA(Phe) + AMP + diphosphate + H(+). The chain is Phenylalanine--tRNA ligase beta subunit (pheT) from Synechococcus elongatus (strain ATCC 33912 / PCC 7942 / FACHB-805) (Anacystis nidulans R2).